The following is a 193-amino-acid chain: MKKYLGVILAALVLTGCPSRPPEPTEPPATIEPVEPQVPTTPTLPPGESVPQPPKIQTLNWEASINPLVAQMLQADGVTPGSILLVDSVKNNTNGSLPIAKATGALYSALSSGKAFTLVPREQLAAAKQTLGLSVDDSLGSRSKAIGLARYVSAQYVLYSDVSGDVKSPQIDMQLMLVQTGEIVWSGNGAVQH.

An N-terminal signal peptide occupies residues 1–16 (MKKYLGVILAALVLTG). A lipid anchor (N-palmitoyl cysteine) is attached at Cys-17. A lipid anchor (S-diacylglycerol cysteine) is attached at Cys-17. The tract at residues 17-55 (CPSRPPEPTEPPATIEPVEPQVPTTPTLPPGESVPQPPK) is disordered. Residues 28 to 41 (PATIEPVEPQVPTT) are compositionally biased toward low complexity.

Belongs to the LpoB family. In terms of assembly, interacts with PBP1b.

It localises to the cell outer membrane. In terms of biological role, regulator of peptidoglycan synthesis that is essential for the function of penicillin-binding protein 1B (PBP1b). The chain is Penicillin-binding protein activator LpoB from Pectobacterium carotovorum subsp. carotovorum (strain PC1).